The following is a 152-amino-acid chain: SKP1-like protein 11 (152 aa).

The tract at residues 94–152 (ILAANYLNIKSLLDLTCQTVADMIKGKTPEEIRSTFNIENDFTPEEEEAVRKENQWAFE) is interaction with the F-box domain of F-box proteins.

Belongs to the SKP1 family. Part of a SCF (SKP1-cullin-F-box) protein ligase complex. Interacts with ADO3/FKF1, COI1/FBL2, EBF1/FBL6, PP2A13, PP2B10, UFO, SKIP2, SKIP15, SKIP16, SKIP32, CPR1/CPR30, At1g55000, At1g67340, At1g78100, At3g04660, At3g16740, At3g61590, At4g38940 and At5g49610. Expressed in young seedlings, cotyledons, roots, leaves, floral stems, inflorescences, pollen, and siliques, with a slightly higher level in inflorescence than in other tissues.

It is found in the nucleus. It participates in protein modification; protein ubiquitination. In terms of biological role, involved in ubiquitination and subsequent proteasomal degradation of target proteins. Together with CUL1, RBX1 and a F-box protein, it forms a SCF E3 ubiquitin ligase complex. The functional specificity of this complex depends on the type of F-box protein. In the SCF complex, it serves as an adapter that links the F-box protein to CUL1. Plays a role during early flowers reproductive development. The polypeptide is SKP1-like protein 11 (ASK11) (Arabidopsis thaliana (Mouse-ear cress)).